The following is a 363-amino-acid chain: Histone-lysine N-methyltransferase ASHH3 (363 aa).

The 52-residue stretch at 63–114 (DDGIFCSCSSSSPGSSSTVCGSNCHCGMLFSSCSSSCKCGSECNNKPFQQRH) folds into the AWS domain. Residues 116-233 (KKMKLIQTEK…KGEHLTYDYQ (118 aa)) enclose the SET domain. Residues 239–255 (ADQDCHCGAVGCRRKLG) form the Post-SET domain.

Belongs to the class V-like SAM-binding methyltransferase superfamily. Histone-lysine methyltransferase family. SET2 subfamily.

Its subcellular location is the nucleus. The protein resides in the chromosome. It is found in the centromere. The catalysed reaction is L-lysyl-[histone] + S-adenosyl-L-methionine = N(6)-methyl-L-lysyl-[histone] + S-adenosyl-L-homocysteine + H(+). In terms of biological role, histone methyltransferase. The chain is Histone-lysine N-methyltransferase ASHH3 (ASHH3) from Arabidopsis thaliana (Mouse-ear cress).